Reading from the N-terminus, the 486-residue chain is Argininosuccinate lyase (486 aa).

It belongs to the lyase 1 family. Argininosuccinate lyase subfamily.

The protein localises to the cytoplasm. It catalyses the reaction 2-(N(omega)-L-arginino)succinate = fumarate + L-arginine. It participates in amino-acid biosynthesis; L-arginine biosynthesis; L-arginine from L-ornithine and carbamoyl phosphate: step 3/3. In Acidobacterium capsulatum (strain ATCC 51196 / DSM 11244 / BCRC 80197 / JCM 7670 / NBRC 15755 / NCIMB 13165 / 161), this protein is Argininosuccinate lyase.